The following is a 994-amino-acid chain: Receptor-like protein 6 (994 aa).

The first 25 residues, 1-25 (MTGLYSSMSFFLRTIVLLFSTSSFC), serve as a signal peptide directing secretion. Over 26–946 (NTFASLTQDS…SSSSSSEEDE (921 aa)) the chain is Extracellular. N-linked (GlcNAc...) asparagine glycans are attached at residues Asn-116, Asn-134, and Asn-154. LRR repeat units lie at residues 122-146 (LQHLQSVNLAYNNFTNSPIPAEFSK), 148-171 (MRLERLNLSRSSFSGHISIKLLQL), 174-199 (LVSLDLSSSFPYSPSSLSIEKPLFLH), 205-228 (FMNLRELDMSSVDISSAIPIEFSY), 230-253 (WSLRSLTLKGCNLLGRFPNSVLLI), 254-278 (PNLESISLDHNLNLEGSLPNFLRNN), 280-301 (LLKLSIYNTSFSGTIPNSISNL), 302-325 (KHLTSLKLQQSAFSGRIPSSLRSL), 326-349 (SHLSNLVLSENNFVGEIPSSVSNL), 350-373 (KQLTLFDVSDNNLNGNFPSSLLNL), 375-397 (QLRYIDICSNHFTGFLPPTISQL), 398-421 (SNLEFFSACDNSFTGSIPSSLFNI), 423-445 (SLTTLGLSYNQLNDTTNIKNISL), 446-471 (LHNLQRLLLDNNNFKASQVDLDVFLS), 477-497 (SLALSGIPLSTTNITSDSEFS), 498-520 (SHLEYLELSGCNIIEFPEFIRNQ), 521-544 (RNLSSIDLSNNNIKGQVPNWLWRL), 546-569 (ELSTVDLSNNSLIGFNGSLKALSG), and 571-595 (KIVMLDLSSNAFQGPLFMPPRGIQY). Asn-277 and Asn-287 each carry an N-linked (GlcNAc...) asparagine glycan. N-linked (GlcNAc...) asparagine glycosylation is found at Asn-420, Asn-435, and Asn-442. N-linked (GlcNAc...) asparagine glycosylation is present at Asn-489. 3 N-linked (GlcNAc...) asparagine glycosylation sites follow: Asn-522, Asn-554, and Asn-561. The stretch at 597-613 (LGSYNNFTGYIPPSICG) is one LRR 20; degenerate repeat. An N-linked (GlcNAc...) asparagine glycan is attached at Asn-602. LRR repeat units follow at residues 614–637 (LANPLILDLSNNNLHGLIPRCLEA), 639–663 (MSSLSVLNLRNNSLDGSLPNIFMNA), 665–687 (VLSSLDVSHNTLEGKLPASLAGC), 689–710 (ALEILNVESNNINDTFPFWLNS), 711–737 (LPKLQVLVLRSNNFRGTLHNVDGVWFG), 739–762 (PLLRITDVSHNDFVGTLPSDYFMN), 803–827 (LTKYTVIDFAGNKIQGKIPESVGIL), 828–851 (KELHVLNLSSNAFTGHIPSSLANL), 852–875 (TNLESLDISQNKIGGEIPPELGTL), and 877–900 (SLEWINVSHNQLVGSIPQGTQFHR). Asn-649 carries N-linked (GlcNAc...) asparagine glycosylation. A glycan (N-linked (GlcNAc...) asparagine) is linked at Asn-701. Asn-762 carries an N-linked (GlcNAc...) asparagine glycan. Asn-834 and Asn-850 each carry an N-linked (GlcNAc...) asparagine glycan. Residues Asn-882 and Asn-902 are each glycosylated (N-linked (GlcNAc...) asparagine). Residues 947–967 (LISWIAACLGFAPGMVFGLTM) form a helical membrane-spanning segment. Residues 968 to 994 (GYIMTSHKHEWFMDTFGRRKGRSTRTR) lie on the Cytoplasmic side of the membrane.

This sequence belongs to the RLP family.

The protein resides in the cell membrane. The chain is Receptor-like protein 6 from Arabidopsis thaliana (Mouse-ear cress).